Consider the following 937-residue polypeptide: Inactive tyrosine-protein kinase transmembrane receptor ROR1 (937 aa).

Residues 1 to 29 (MHRPRRRGTRPPLLALLAALLLAARGAAA) form the signal peptide. Topologically, residues 30-406 (QETELSVSAE…KEKNKMEILY (377 aa)) are extracellular. Positions 42–147 (PTSSWNISSE…EVVSSTGVLF (106 aa)) constitute an Ig-like C2-type domain. N-linked (GlcNAc...) asparagine glycans are attached at residues N47 and N66. Cystine bridges form between C79/C131, C170/C235, C178/C228, C219/C260, C248/C296, C252/C282, C313/C391, C334/C374, and C362/C386. The 135-residue stretch at 165-299 (EEDGFCQPYR…SPEAANCIRI (135 aa)) folds into the FZ domain. A glycan (N-linked (GlcNAc...) asparagine) is linked at N184. The Kringle domain maps to 312–391 (KCYNSTGVDY…KSDLCDIPAC (80 aa)). N-linked (GlcNAc...) asparagine glycosylation occurs at N315. A helical transmembrane segment spans residues 407-427 (ILVPSVAIPLAIALLFFFICV). The Cytoplasmic portion of the chain corresponds to 428–937 (CRNNQKSSSA…HTESMISAEL (510 aa)). The region spanning 473-746 (VRFMEELGEC…PRFKDIHVRL (274 aa)) is the Protein kinase domain. Residues 479–487 (LGECAFGKI) and K506 contribute to the ATP site. Y645 is modified (phosphotyrosine; by autocatalysis). Positions 753–762 (SSHTSSTTPS) are enriched in low complexity. Disordered stretches follow at residues 753–779 (SSHT…SPVS) and 833–890 (AAHY…HMSI). Residues 763–779 (GGNATTQTTSLSASPVS) are compositionally biased toward polar residues. Positions 854-864 (RSPSSASGSTS) are enriched in low complexity. A compositionally biased stretch (polar residues) spans 865 to 880 (TGHVTSLPSSGSNQEA).

Belongs to the protein kinase superfamily. Tyr protein kinase family. ROR subfamily. As to quaternary structure, interacts with ERBB2 and IGFBP5. Expressed strongly in human heart, lung and kidney, but weakly in the CNS. Isoform Short is strongly expressed in fetal and adult CNS and in a variety of human cancers, including those originating from CNS or PNS neuroectoderm.

The protein resides in the membrane. Its subcellular location is the cell projection. The protein localises to the axon. Its function is as follows. Has very low kinase activity in vitro and is unlikely to function as a tyrosine kinase in vivo. Receptor for ligand WNT5A which activate downstream NFkB signaling pathway and may result in the inhibition of WNT3A-mediated signaling. In inner ear, crucial for spiral ganglion neurons to innervate auditory hair cells. Via IGFBP5 ligand, forms a complex with ERBB2 to enhance CREB oncogenic signaling. In Homo sapiens (Human), this protein is Inactive tyrosine-protein kinase transmembrane receptor ROR1 (ROR1).